The primary structure comprises 474 residues: MRFTFTSRCLALFLLLNHPTPILPAFSNQTYPTIEPKPFLYVVGRKKMMDAQYKCYDRMQQLPAYQGEGPYCNRTWDGWLCWDDTPAGVLSYQFCPDYFPDFDPSEKVTKYCDEKGVWFKHPENNRTWSNYTMCNAFTPEKLKNAYVLYYLAIVGHSLSIFTLVISLGIFVFFRSLGCQRVTLHKNMFLTYILNSMIIIIHLVEVVPNGELVRRDPVSCKILHFFHQYMMACNYFWMLCEGIYLHTLIVVAVFTEKQRLRWYYLLGWGFPLVPTTIHAITRAVYFNDNCWLSVETHLLYIIHGPVMAALVVNFFFLLNIVRVLVTKMRETHEAESHMYLKAVKATMILVPLLGIQFVVFPWRPSNKMLGKIYDYVMHSLIHFQGFFVATIYCFCNNEVQTTVKRQWAQFKIQWNQRWGRRPSNRSARAAAAAAEAGDIPIYICHQELRNEPANNQGEESAEIIPLNIIEQESSA.

A signal peptide spans 1 to 24 (MRFTFTSRCLALFLLLNHPTPILP). The Extracellular segment spans residues 25 to 146 (AFSNQTYPTI…FTPEKLKNAY (122 aa)). Asparagine 28, asparagine 73, asparagine 125, and asparagine 130 each carry an N-linked (GlcNAc...) asparagine glycan. Cystine bridges form between cysteine 55/cysteine 81, cysteine 72/cysteine 112, and cysteine 95/cysteine 134. The helical transmembrane segment at 147–169 (VLYYLAIVGHSLSIFTLVISLGI) threads the bilayer. Over 170-181 (FVFFRSLGCQRV) the chain is Cytoplasmic. The chain crosses the membrane as a helical span at residues 182–202 (TLHKNMFLTYILNSMIIIIHL). Over 203 to 219 (VEVVPNGELVRRDPVSC) the chain is Extracellular. An intrachain disulfide couples cysteine 219 to cysteine 289. The helical transmembrane segment at 220–242 (KILHFFHQYMMACNYFWMLCEGI) threads the bilayer. The Cytoplasmic segment spans residues 243-259 (YLHTLIVVAVFTEKQRL). The chain crosses the membrane as a helical span at residues 260 to 280 (RWYYLLGWGFPLVPTTIHAIT). At 281–296 (RAVYFNDNCWLSVETH) the chain is on the extracellular side. Residues 297–320 (LLYIIHGPVMAALVVNFFFLLNIV) form a helical membrane-spanning segment. At 321–340 (RVLVTKMRETHEAESHMYLK) the chain is on the cytoplasmic side. The helical transmembrane segment at 341-359 (AVKATMILVPLLGIQFVVF) threads the bilayer. Topologically, residues 360 to 367 (PWRPSNKM) are extracellular. Residues 368–394 (LGKIYDYVMHSLIHFQGFFVATIYCFC) form a helical membrane-spanning segment. The Cytoplasmic segment spans residues 395–474 (NNEVQTTVKR…LNIIEQESSA (80 aa)).

It belongs to the G-protein coupled receptor 2 family. In terms of assembly, heterodimer of CALCR and RAMP1, RAMP2 or RAMP3; the receptor complexes function as AMYR1, AMYR2 and AMYR3 receptors, respectively, and respond to amylin/IAPP, calcitonin/CT and CGRP1 ligands. Interacts with GPRASP2.

It localises to the cell membrane. Sensitive to cholera toxin. In terms of biological role, g protein-coupled receptor activated by ligand peptides amylin (IAPP), calcitonin (CT/CALCA) and calcitonin gene-related peptide type 1 (CGRP1/CALCA). CALCR interacts with receptor-activity-modifying proteins RAMP1, 2 and 3 to form receptor complexes AMYR1, 2 and 3, respectively. IAPP, CT and CGRP1 activate CALCR and AMYRs with distinct modes of receptor activation resulting in specific phenotypes. Ligand binding causes a conformation change that triggers signaling via guanine nucleotide-binding proteins (G proteins) and modulates the activity of downstream effectors. Activates cAMP-dependent pathway. Its function is as follows. Non-functional protein. Unable to couple to G proteins and activate adenylyl cyclase. Does not undergo receptor internalization following ligand binding. In Homo sapiens (Human), this protein is Calcitonin receptor.